We begin with the raw amino-acid sequence, 264 residues long: tRNA (guanine-N(1)-)-methyltransferase (264 aa).

S-adenosyl-L-methionine is bound by residues Gly-113 and 133–138; that span reads IGDYVL. The segment at 244–264 is disordered; that stretch reads VQQAATPGGQRRPPWHRDSRA.

This sequence belongs to the RNA methyltransferase TrmD family. As to quaternary structure, homodimer.

It localises to the cytoplasm. It carries out the reaction guanosine(37) in tRNA + S-adenosyl-L-methionine = N(1)-methylguanosine(37) in tRNA + S-adenosyl-L-homocysteine + H(+). In terms of biological role, specifically methylates guanosine-37 in various tRNAs. In Frankia alni (strain DSM 45986 / CECT 9034 / ACN14a), this protein is tRNA (guanine-N(1)-)-methyltransferase.